Reading from the N-terminus, the 877-residue chain is Alanine--tRNA ligase (877 aa).

Zn(2+) contacts are provided by His-563, His-567, Cys-667, and His-671.

The protein belongs to the class-II aminoacyl-tRNA synthetase family. Zn(2+) serves as cofactor.

It localises to the cytoplasm. It catalyses the reaction tRNA(Ala) + L-alanine + ATP = L-alanyl-tRNA(Ala) + AMP + diphosphate. In terms of biological role, catalyzes the attachment of alanine to tRNA(Ala) in a two-step reaction: alanine is first activated by ATP to form Ala-AMP and then transferred to the acceptor end of tRNA(Ala). Also edits incorrectly charged Ser-tRNA(Ala) and Gly-tRNA(Ala) via its editing domain. In Cytophaga hutchinsonii (strain ATCC 33406 / DSM 1761 / CIP 103989 / NBRC 15051 / NCIMB 9469 / D465), this protein is Alanine--tRNA ligase.